Here is a 696-residue protein sequence, read N- to C-terminus: TBC1 domain family member 12 (696 aa).

N-acetylmethionine is present on methionine 1. Disordered stretches follow at residues 1 to 59 (MMGP…PPPR), 91 to 121 (PAARGSGMTNGDSGFLLRQDRRGPEEARRRR), and 156 to 234 (CCLA…ARAR). Residues 46–55 (PPEEAGEEEA) are compositionally biased toward acidic residues. A compositionally biased stretch (basic and acidic residues) spans 108–118 (RQDRRGPEEAR). Serine 205 carries the post-translational modification Phosphoserine. The segment covering 209–222 (LLPSAGPSAPLPAA) has biased composition (low complexity). Serine 236 carries the post-translational modification Phosphoserine. A coiled-coil region spans residues 330–373 (KSVEEALRHRQEYDEMVAEAKKREIKEAHKRKRIMKERFKQEES). Residues 405–613 (GLPPSVRGKV…RVWDVFCRDG (209 aa)) form the Rab-GAP TBC domain. The residue at position 668 (serine 668) is a Phosphoserine. Threonine 669 carries the phosphothreonine modification.

In terms of assembly, interacts with RAB11A; this interaction recruits TBC1D12 to RAB11A-positive recycling endosomes.

The protein localises to the endosome. Its function is as follows. RAB11A-binding protein that plays a role in neurite outgrowth. This Mus musculus (Mouse) protein is TBC1 domain family member 12 (Tbc1d12).